A 440-amino-acid chain; its full sequence is Ferreportin (440 aa).

Residues 1–8 (MKVQSLLR) are Cytoplasmic-facing. A helical transmembrane segment spans residues 9–38 (IETQLLLGRLLTRSGDQAWDFVVPFALLVI). Aspartate 24 is a Ca(2+) binding site. The Extracellular segment spans residues 39–42 (FPGK). A helical transmembrane segment spans residues 43-69 (LQVAAFYYLIVKIGTFLLTPSSGKWID). At 70–72 (THP) the chain is on the cytoplasmic side. Residues 73 to 103 (RIQVVKWGVWLQFFAILAGMVFFGMLDGLVR) traverse the membrane as a helical segment. Ca(2+) is bound at residue glutamine 84. Over 104–109 (AGGRES) the chain is Extracellular. The helical transmembrane segment at 110 to 145 (WLLSVLFIALALSGVMASLGSQITDISVGNDLAPSL) threads the bilayer. At 146–147 (VA) the chain is on the cytoplasmic side. Residues 148 to 176 (PEKLTHFNSWLRRIDLATEVGAPILAGAL) form a helical membrane-spanning segment. Topologically, residues 177–186 (FAFHPEQLPL) are extracellular. A helical transmembrane segment spans residues 187–213 (AGLFLIGLWNLVSFVPEYFLLRNVIQR). Residues asparagine 196 and glutamate 203 each coordinate Ca(2+). Topologically, residues 214–242 (SGLKIKVLTEAQSWKDTFHINLRGSFSDP) are cytoplasmic. Residues 243–271 (IFWLILSYALLWLSVLSPHGVLLAAYLKD) form a helical membrane-spanning segment. The Extracellular segment spans residues 272 to 276 (EMRLP). The chain crosses the membrane as a helical span at residues 277–304 (ETEIGLFRGLGAVFGLISTVSFPYLVRR). Topologically, residues 305-306 (LG) are cytoplasmic. A helical transmembrane segment spans residues 307–329 (LISSSRWHLGFQGVTLGIAVTAF). Residues 330 to 335 (AMGSTA) are Extracellular-facing. A helical membrane pass occupies residues 336-365 (SVYVFLGCILLSRVGLYGFSNGEFELRQRL). The Cytoplasmic segment spans residues 366 to 370 (IPEGR). A helical transmembrane segment spans residues 371–395 (RGELNSLSSLTTTSATLILFSAGSL). Residues 396–398 (LPQ) lie on the Extracellular side of the membrane. A helical transmembrane segment spans residues 399-424 (TEDFKYLVYVSLAAVLLANVVFIKWS). Residues 425–440 (SRQGVVTSGAAEPVES) are Cytoplasmic-facing.

It belongs to the ferroportin (FP) (TC 2.A.100) family. Requires Ca(2+) as cofactor.

The protein localises to the cell membrane. Its function is as follows. Iron transpoter that exports Fe(2+) from the cell. Also binds to Co(2+) and Ni(2+). May act as a multivalent divalent metal transporter. The transporter is composed of 12 transmembrane (TM) helices organized into N-terminal (TM1-6) and C-terminal (TM7-12) domains. The substrate-binding site is formed at the interface of the two domains and is alternately accessible from either side of the membrane. The transport cycle is viewed as a series of ligand-induced conformational changes that include open outward and open inward states. This chain is Ferreportin (slc39), found in Bdellovibrio bacteriovorus (strain ATCC 15356 / DSM 50701 / NCIMB 9529 / HD100).